We begin with the raw amino-acid sequence, 837 residues long: PE-PGRS family protein PE_PGRS4 (837 aa).

The PE domain maps to 4 to 94 (VIAAPEVIAA…GAYAAAEAAA (91 aa)). Residues 811 to 825 (NGGKAGGTPGAGGTS) show a composition bias toward gly residues. Positions 811–837 (NGGKAGGTPGAGGTSGLIIGENGLNGL) are disordered. Residues 826-837 (GLIIGENGLNGL) are compositionally biased toward low complexity.

The protein belongs to the mycobacterial PE family. PGRS subfamily.

The polypeptide is PE-PGRS family protein PE_PGRS4 (Mycobacterium tuberculosis (strain ATCC 25618 / H37Rv)).